The sequence spans 532 residues: Hepatocyte nuclear factor 1-beta-B (532 aa).

Positions 1–35 (MFTDMVSKLTSLQQELLSALLDSGVTKDVLVQALE) are dimerization. In terms of domain architecture, HNF-p1 spans 5–36 (MVSKLTSLQQELLSALLDSGVTKDVLVQALED). The tract at residues 74–95 (TGAQGKGGKLSGDEGSEDGDDF) is disordered. Residues 102–197 (RELQSLNTEE…IDRQFDRVQG (96 aa)) enclose the POU-specific atypical domain. Gly residues predominate over residues 222–231 (SSGAAGGSGA). Disordered stretches follow at residues 222 to 245 (SSGAAGGSGAAVGDEGEPGSKRMR) and 500 to 532 (EAGQFSHPSRYSTMDSSTITHLGSSKQCPLQAW). A DNA-binding region (homeobox; HNF1-type) is located at residues 244–324 (MRRNRFKWGP…NRRKEEAFRQ (81 aa)). Over residues 505–532 (SHPSRYSTMDSSTITHLGSSKQCPLQAW) the composition is skewed to polar residues.

It belongs to the HNF1 homeobox family. As to quaternary structure, binds DNA as a dimer. Can form homodimer or heterodimer with HNF1-alpha. As to expression, first expressed at stage 10 in the intermediate mesoderm. Expressed in rhombomere r5 by 14 hpf with expression diminishing by 18 hpf.

It is found in the nucleus. Its function is as follows. Transcription factor that binds to the inverted palindrome 5'-GTTAATNATTAAC-3'. Acts downstream of hnf1ba but is not required for induction of rhombomere r5/r6 gene expression in the hindbrain. The polypeptide is Hepatocyte nuclear factor 1-beta-B (Danio rerio (Zebrafish)).